The following is a 489-amino-acid chain: MTFRNCVAVDLGASSGRVMLARYERECRSLTLREIHRFNNGLHSQNGYVTWNVDSLESAIRLGLNKVCEEGIRIDSIGIDTWGVDFVLLDQQGQRVGLPVAYRDSRTNGLMAQAQQQLGKRDIYQRSGIQFLPFNTIYQLRALTEQQPELIPHIAHALLIPDYFSYRLTGKMNWEYTNATTTQLVNINSDDWDESLLAWSGANKAWFGRPTHPGNVIGHWICPQGNEIPVVAVASHDTASAVIASPLNGSRAAYLSSGTWSLMGFESQTPFTNDTALAANITNEGGAEGRYRVLKNIMGLWLLQRVLQERQINDLPALIAATQALPACRFIINPNDDRFINPDEMCSEIQAACRETAQPIPESDAELARCIFDSLALLYADVLHELAQLRGEDFSQLHIVGGGCQNTLLNQLCADACGIRVIAGPVEASTLGNIGIQLMTLDELNNVDDFRQVVSTTANLTTFTPNPDSEIAHYVAQIHSTRQTKELCA.

13-17 (ASSGR) is an ATP binding site. An intrachain disulfide couples Cys68 to Cys222. Substrate-binding positions include Gly83 and 236 to 238 (HDT). Asp237 functions as the Proton acceptor in the catalytic mechanism. An ATP-binding site is contributed by Thr259. Asn296 is a substrate binding site. Gln304 provides a ligand contact to ATP. A disulfide bridge connects residues Cys353 and Cys370. Gly402 contacts ATP. A disulfide bond links Cys413 and Cys417.

Belongs to the rhamnulokinase family. As to quaternary structure, monomer. The cofactor is Mg(2+).

The enzyme catalyses L-rhamnulose + ATP = L-rhamnulose 1-phosphate + ADP + H(+). It participates in carbohydrate degradation; L-rhamnose degradation; glycerone phosphate from L-rhamnose: step 2/3. Its function is as follows. Involved in the catabolism of L-rhamnose (6-deoxy-L-mannose). Catalyzes the transfer of the gamma-phosphate group from ATP to the 1-hydroxyl group of L-rhamnulose to yield L-rhamnulose 1-phosphate. The chain is Rhamnulokinase from Escherichia coli O1:K1 / APEC.